The primary structure comprises 543 residues: Chaperonin GroEL 7 (543 aa).

ATP contacts are provided by residues T30 to P33, K51, D87 to T91, G415, and D496.

The protein belongs to the chaperonin (HSP60) family. In terms of assembly, forms a cylinder of 14 subunits composed of two heptameric rings stacked back-to-back. Interacts with the co-chaperonin GroES.

The protein resides in the cytoplasm. It catalyses the reaction ATP + H2O + a folded polypeptide = ADP + phosphate + an unfolded polypeptide.. Together with its co-chaperonin GroES, plays an essential role in assisting protein folding. The GroEL-GroES system forms a nano-cage that allows encapsulation of the non-native substrate proteins and provides a physical environment optimized to promote and accelerate protein folding. The protein is Chaperonin GroEL 7 of Bradyrhizobium diazoefficiens (strain JCM 10833 / BCRC 13528 / IAM 13628 / NBRC 14792 / USDA 110).